A 28-amino-acid chain; its full sequence is VDACYEACMHHHMNSDDCIEACKNPVPP.

Cystine bridges form between Cys-4/Cys-22 and Cys-8/Cys-18.

It belongs to the short scorpion toxin superfamily. Potassium channel inhibitor family. Gamma-KTx 2 subfamily. In terms of processing, contains 2 disulfide bonds. Expressed by the venom gland.

Its subcellular location is the secreted. Functionally, reversibly blocks voltage-gated potassium channels Kv1.2/KCNA2 and Kv1.3/KCNA3. The protein is Potassium channel toxin kappa-KTx 2.9 of Pandinus imperator (Emperor scorpion).